The primary structure comprises 156 residues: D-aminoacyl-tRNA deacylase (156 aa).

The short motif at 137 to 138 (GP) is the Gly-cisPro motif, important for rejection of L-amino acids element.

Belongs to the DTD family. As to quaternary structure, homodimer.

It localises to the cytoplasm. It carries out the reaction glycyl-tRNA(Ala) + H2O = tRNA(Ala) + glycine + H(+). It catalyses the reaction a D-aminoacyl-tRNA + H2O = a tRNA + a D-alpha-amino acid + H(+). In terms of biological role, an aminoacyl-tRNA editing enzyme that deacylates mischarged D-aminoacyl-tRNAs. Also deacylates mischarged glycyl-tRNA(Ala), protecting cells against glycine mischarging by AlaRS. Acts via tRNA-based rather than protein-based catalysis; rejects L-amino acids rather than detecting D-amino acids in the active site. By recycling D-aminoacyl-tRNA to D-amino acids and free tRNA molecules, this enzyme counteracts the toxicity associated with the formation of D-aminoacyl-tRNA entities in vivo and helps enforce protein L-homochirality. The sequence is that of D-aminoacyl-tRNA deacylase from Ruegeria sp. (strain TM1040) (Silicibacter sp.).